The sequence spans 109 residues: Ferredoxin CarAc (109 aa).

The 2Fe-2S ferredoxin-type domain occupies 3-108; it reads AKVRVIFRAA…GLTLELPKAQ (106 aa). [2Fe-2S] cluster-binding residues include C43, C49, C52, and C89.

Belongs to the adrenodoxin/putidaredoxin family. As to quaternary structure, monomer. Carbazole 1,9a-dioxygenase complex consists of a terminal oxygenase component CarAa, a ferredoxin reductase component fdr and a ferredoxin component CarAc. [2Fe-2S] cluster is required as a cofactor.

Functionally, part of the multicomponent carbazole 1,9a-dioxygenase (CARDO), that converts carbazole (CAR) into 2-aminobiphenyl-2,3-diol. Acts as a mediator in the electron transfer from fdr to CarAa. In Sphingomonas sp, this protein is Ferredoxin CarAc (carAc).